A 152-amino-acid polypeptide reads, in one-letter code: Deoxyuridine 5'-triphosphate nucleotidohydrolase (152 aa).

Substrate-binding positions include 71-73 (RSG), Asn84, 88-90 (LID), and Met98.

It belongs to the dUTPase family. It depends on Mg(2+) as a cofactor.

The catalysed reaction is dUTP + H2O = dUMP + diphosphate + H(+). It participates in pyrimidine metabolism; dUMP biosynthesis; dUMP from dCTP (dUTP route): step 2/2. In terms of biological role, this enzyme is involved in nucleotide metabolism: it produces dUMP, the immediate precursor of thymidine nucleotides and it decreases the intracellular concentration of dUTP so that uracil cannot be incorporated into DNA. The protein is Deoxyuridine 5'-triphosphate nucleotidohydrolase of Shewanella loihica (strain ATCC BAA-1088 / PV-4).